Reading from the N-terminus, the 467-residue chain is Chromosomal replication initiator protein DnaA (467 aa).

Residues 1–85 (MTTTLWPQVL…LEVGEYAIES (85 aa)) form a domain I, interacts with DnaA modulators region. Residues 85 to 130 (SFNEPENTSVPQPLRETKAEREAAEKAASSTSKKKSDSPPKKTIKH) are domain II. Residues 87–129 (NEPENTSVPQPLRETKAEREAAEKAASSTSKKKSDSPPKKTIK) are disordered. Residues 99–109 (RETKAEREAAE) show a composition bias toward basic and acidic residues. The segment at 131–347 (NLNTNFTFDT…GALKRVGAFA (217 aa)) is domain III, AAA+ region. ATP contacts are provided by G175, G177, K178, and T179. The segment at 348-467 (QFTQQLVTVD…FNSLIRIITN (120 aa)) is domain IV, binds dsDNA.

It belongs to the DnaA family. Oligomerizes as a right-handed, spiral filament on DNA at oriC.

It localises to the cytoplasm. In terms of biological role, plays an essential role in the initiation and regulation of chromosomal replication. ATP-DnaA binds to the origin of replication (oriC) to initiate formation of the DNA replication initiation complex once per cell cycle. Binds the DnaA box (a 9 base pair repeat at the origin) and separates the double-stranded (ds)DNA. Forms a right-handed helical filament on oriC DNA; dsDNA binds to the exterior of the filament while single-stranded (ss)DNA is stabiized in the filament's interior. The ATP-DnaA-oriC complex binds and stabilizes one strand of the AT-rich DNA unwinding element (DUE), permitting loading of DNA polymerase. After initiation quickly degrades to an ADP-DnaA complex that is not apt for DNA replication. Binds acidic phospholipids. The sequence is that of Chromosomal replication initiator protein DnaA from Hydrogenovibrio crunogenus (strain DSM 25203 / XCL-2) (Thiomicrospira crunogena).